The following is a 158-amino-acid chain: Interleukin-17A (158 aa).

The signal sequence occupies residues 1-25 (MSPGRASSVSLMLLLLLSLAATVKA). N-linked (GlcNAc...) asparagine glycosylation occurs at Asn71. 2 disulfide bridges follow: Cys97–Cys147 and Cys102–Cys149.

Belongs to the IL-17 family. As to quaternary structure, homodimer. Forms complexes with IL17RA and IL17RC receptors with 2:1 binding stoichiometry: two receptor chains for one interleukin molecule. IL17A homodimer preferentially drives the formation of IL17RA-IL17RC heterodimeric receptor complex. IL17A homodimer adopts an asymmetrical ternary structure with one IL17RA molecule, allowing for high affinity interactions of one IL17A monomer with one IL17RA molecule (via D1 and D2 domains), while disfavoring binding of a second IL17RA molecule on the other IL17A monomer. Heterodimer with IL17F. IL17A-IL17F forms complexes with IL17RA-IL17RC, but with lower affinity when compared to IL17A homodimer. IL17RA and IL17RC chains cannot distinguish between IL17A and IL17F molecules, potentially enabling the formation of topologically distinct complexes. Expressed by Th17 cell lineage (at protein level). The expression pattern reflects the differentiation state, with IL17A-IL17F heterodimers produced at higher levels than IL17A-IL17A and IL17F-IL17F dimers in fully differentiated Th17 cells. Expressed in innate lymphoid cells (at protein level). Expressed in gamma-delta T cell subsets (at protein level). Expressed in iNKT cells (at protein level).

The protein resides in the secreted. In terms of biological role, effector cytokine of innate and adaptive immune system involved in antimicrobial host defense and maintenance of tissue integrity. Signals via IL17RA-IL17RC heterodimeric receptor complex, triggering homotypic interaction of IL17RA and IL17RC chains with TRAF3IP2 adapter. This leads to downstream TRAF6-mediated activation of NF-kappa-B and MAPkinase pathways ultimately resulting in transcriptional activation of cytokines, chemokines, antimicrobial peptides and matrix metalloproteinases, with potential strong immune inflammation. Plays an important role in connecting T cell-mediated adaptive immunity and acute inflammatory response to destroy extracellular bacteria and fungi. As a signature effector cytokine of T-helper 17 cells (Th17), primarily induces neutrophil activation and recruitment at infection and inflammatory sites. In airway epithelium, mediates neutrophil chemotaxis via induction of CXCL1 and CXCL5 chemokines. In secondary lymphoid organs, contributes to germinal center formation by regulating the chemotactic response of B cells to CXCL12 and CXCL13, enhancing retention of B cells within the germinal centers, B cell somatic hypermutation rate and selection toward plasma cells. Effector cytokine of a subset of gamma-delta T cells that functions as part of an inflammatory circuit downstream IL1B, TLR2 and IL23A-IL12B to promote neutrophil recruitment for efficient bacterial clearance. Effector cytokine of innate immune cells including invariant natural killer cell (iNKT) and group 3 innate lymphoid cells that mediate initial neutrophilic inflammation. Involved in the maintenance of the integrity of epithelial barriers during homeostasis and pathogen infection. Upon acute injury, has a direct role in epithelial barrier formation by regulating OCLN localization and tight junction biogenesis. As part of the mucosal immune response induced by commensal bacteria, enhances host's ability to resist pathogenic bacterial and fungal infections by promoting neutrophil recruitment and antimicrobial peptides release. In synergy with IL17F, mediates the production of antimicrobial beta-defensins DEFB1, DEFB103A, and DEFB104A by mucosal epithelial cells, limiting the entry of microbes through the epithelial barriers. Involved in antiviral host defense through various mechanisms. Enhances immunity against West Nile virus by promoting T cell cytotoxicity. May play a beneficial role in influenza A virus (H5N1) infection by enhancing B cell recruitment and immune response in the lung. Contributes to influenza A virus (H1N1) clearance by driving the differentiation of B-1a B cells, providing for production of virus-specific IgM antibodies at first line of host defense. The protein is Interleukin-17A (Il17a) of Mus musculus (Mouse).